The primary structure comprises 164 residues: ATP synthase subunit b (164 aa).

The helical transmembrane segment at 5–25 (IGELIGNFILVAGSFLLLIVL) threads the bilayer.

The protein belongs to the ATPase B chain family. In terms of assembly, F-type ATPases have 2 components, F(1) - the catalytic core - and F(0) - the membrane proton channel. F(1) has five subunits: alpha(3), beta(3), gamma(1), delta(1), epsilon(1). F(0) has three main subunits: a(1), b(2) and c(10-14). The alpha and beta chains form an alternating ring which encloses part of the gamma chain. F(1) is attached to F(0) by a central stalk formed by the gamma and epsilon chains, while a peripheral stalk is formed by the delta and b chains.

It localises to the cell membrane. Its function is as follows. F(1)F(0) ATP synthase produces ATP from ADP in the presence of a proton or sodium gradient. F-type ATPases consist of two structural domains, F(1) containing the extramembraneous catalytic core and F(0) containing the membrane proton channel, linked together by a central stalk and a peripheral stalk. During catalysis, ATP synthesis in the catalytic domain of F(1) is coupled via a rotary mechanism of the central stalk subunits to proton translocation. Functionally, component of the F(0) channel, it forms part of the peripheral stalk, linking F(1) to F(0). This chain is ATP synthase subunit b, found in Streptococcus gordonii (strain Challis / ATCC 35105 / BCRC 15272 / CH1 / DL1 / V288).